We begin with the raw amino-acid sequence, 1119 residues long: DISARM protein DrmA (1119 aa).

The disordered stretch occupies residues 73–95 (PESGMEEDVEQQRNSELEQEAEE). One can recognise a Helicase C-terminal domain in the interval 813-986 (ELSKYIDPYR…ATPYASRARD (174 aa)).

The protein belongs to the helicase family.

Its subcellular location is the cytoplasm. Its function is as follows. Component of antiviral defense system DISARM (defense island system associated with restriction-modification), composed of DrmE, DrmA, DrmB, DrmC and DrmMII. DISARM is probably a multi-gene restriction module, this subunit is probably a helicase. Expression of DISARM in B.subtilis (strain BEST7003) confers resistance to phages Nf, phi29, phi105, phi3T, SPO1, SPR and SPP1. Protection is over 10(7)-fold against phi3T, 10(4)-10(5)-fold against Nf, phi29, phi105 and SPR, 100-fold against SPO1 and 10-fold against SPP1. DISARM does not interfere with phage adsorption, but instead interferes with (phi3T) DNA replication early in its cycle, preventing replication, circularization and lysogeny and probably causes phage DNA degradation (DNA is degraded in SPP1-infected cells). This Bacillus paralicheniformis (strain ATCC 9945a / NCIMB 11709 / CD-2) protein is DISARM protein DrmA.